The sequence spans 251 residues: Imidazole glycerol phosphate synthase subunit HisF (251 aa).

Catalysis depends on residues D11 and D130.

The protein belongs to the HisA/HisF family. As to quaternary structure, heterodimer of HisH and HisF.

Its subcellular location is the cytoplasm. The enzyme catalyses 5-[(5-phospho-1-deoxy-D-ribulos-1-ylimino)methylamino]-1-(5-phospho-beta-D-ribosyl)imidazole-4-carboxamide + L-glutamine = D-erythro-1-(imidazol-4-yl)glycerol 3-phosphate + 5-amino-1-(5-phospho-beta-D-ribosyl)imidazole-4-carboxamide + L-glutamate + H(+). Its pathway is amino-acid biosynthesis; L-histidine biosynthesis; L-histidine from 5-phospho-alpha-D-ribose 1-diphosphate: step 5/9. Its function is as follows. IGPS catalyzes the conversion of PRFAR and glutamine to IGP, AICAR and glutamate. The HisF subunit catalyzes the cyclization activity that produces IGP and AICAR from PRFAR using the ammonia provided by the HisH subunit. This chain is Imidazole glycerol phosphate synthase subunit HisF, found in Chlorobium phaeovibrioides (strain DSM 265 / 1930) (Prosthecochloris vibrioformis (strain DSM 265)).